Reading from the N-terminus, the 300-residue chain is Glycine betaine/carnitine transport binding protein GbuC (300 aa).

A signal peptide spans 1–20 (MLKKLITTAVLAMLIFTLAA). The N-palmitoyl cysteine moiety is linked to residue Cys21. The S-diacylglycerol cysteine moiety is linked to residue Cys21.

In terms of assembly, the complex is composed of two ATP-binding proteins (GbuA), two transmembrane proteins (GbuB) and a solute-binding protein (GbuC).

It localises to the cell membrane. With respect to regulation, the complex is activated by an osmotic gradient or by low temperature. Part of the ABC transporter complex GbuABC involved in glycine betaine uptake. Involved, with BetL and OpuC, in osmoprotection and cryoprotection of Listeria. Can also uptake carnitine when carnitine is abundant in the growth medium. The polypeptide is Glycine betaine/carnitine transport binding protein GbuC (gbuC) (Listeria monocytogenes serotype 1/2a (strain 10403S)).